The following is a 101-amino-acid chain: Small ribosomal subunit protein bS6 (101 aa).

It belongs to the bacterial ribosomal protein bS6 family.

In terms of biological role, binds together with bS18 to 16S ribosomal RNA. This Staphylococcus saprophyticus subsp. saprophyticus (strain ATCC 15305 / DSM 20229 / NCIMB 8711 / NCTC 7292 / S-41) protein is Small ribosomal subunit protein bS6.